A 396-amino-acid polypeptide reads, in one-letter code: Methionine import ATP-binding protein MetN 2 (396 aa).

Positions 41-280 (VSFELVGKVF…PRHGATRALL (240 aa)) constitute an ABC transporter domain. 77–84 (GRSGAGKS) is an ATP binding site.

It belongs to the ABC transporter superfamily. Methionine importer (TC 3.A.1.24) family. In terms of assembly, the complex is composed of two ATP-binding proteins (MetN), two transmembrane proteins (MetI) and a solute-binding protein (MetQ).

The protein localises to the cell inner membrane. It carries out the reaction L-methionine(out) + ATP + H2O = L-methionine(in) + ADP + phosphate + H(+). The enzyme catalyses D-methionine(out) + ATP + H2O = D-methionine(in) + ADP + phosphate + H(+). Part of the ABC transporter complex MetNIQ involved in methionine import. Responsible for energy coupling to the transport system. This Burkholderia pseudomallei (strain K96243) protein is Methionine import ATP-binding protein MetN 2.